The following is a 201-amino-acid chain: MFSPLTKQLIEALQCLPGIGPKSAQRMAFHLLAKSGQAKGLALSDALQSAIRQVGECKLCQIYTEQPLCNICNNPKRDSTLLCVVESPADVVAIEQTQIYSGRYFVLHGHLSPLDGIGPQEIGIPALLDRLRNETIKELIIATNATMEGKATAHYVANHIDHTKIKCSRIAHGVPMGGELEYLDGGTLIHALHSRIPVEDN.

The segment at 57-72 (CKLCQIYTEQPLCNIC) adopts a C4-type zinc-finger fold. The 96-residue stretch at 80 to 175 (TLLCVVESPA…KCSRIAHGVP (96 aa)) folds into the Toprim domain.

The protein belongs to the RecR family.

In terms of biological role, may play a role in DNA repair. It seems to be involved in an RecBC-independent recombinational process of DNA repair. It may act with RecF and RecO. The polypeptide is Recombination protein RecR (Coxiella burnetii (strain RSA 493 / Nine Mile phase I)).